We begin with the raw amino-acid sequence, 191 residues long: Dephospho-CoA kinase (191 aa).

Residues 3 to 191 (AIGITGSYAS…KLIKDLECRV (189 aa)) form the DPCK domain. 11-16 (ASGKTF) is an ATP binding site.

The protein belongs to the CoaE family.

Its subcellular location is the cytoplasm. The enzyme catalyses 3'-dephospho-CoA + ATP = ADP + CoA + H(+). It participates in cofactor biosynthesis; coenzyme A biosynthesis; CoA from (R)-pantothenate: step 5/5. In terms of biological role, catalyzes the phosphorylation of the 3'-hydroxyl group of dephosphocoenzyme A to form coenzyme A. The chain is Dephospho-CoA kinase from Rickettsia prowazekii (strain Madrid E).